The chain runs to 252 residues: 3-dehydroquinate dehydratase (252 aa).

3-dehydroquinate is bound by residues Ser21, 46-48, and Arg82; that span reads EWR. His143 functions as the Proton donor/acceptor in the catalytic mechanism. Lys170 serves as the catalytic Schiff-base intermediate with substrate. Arg213, Ser232, and Gln236 together coordinate 3-dehydroquinate.

This sequence belongs to the type-I 3-dehydroquinase family. Homodimer.

The enzyme catalyses 3-dehydroquinate = 3-dehydroshikimate + H2O. It functions in the pathway metabolic intermediate biosynthesis; chorismate biosynthesis; chorismate from D-erythrose 4-phosphate and phosphoenolpyruvate: step 3/7. Its function is as follows. Involved in the third step of the chorismate pathway, which leads to the biosynthesis of aromatic amino acids. Catalyzes the cis-dehydration of 3-dehydroquinate (DHQ) and introduces the first double bond of the aromatic ring to yield 3-dehydroshikimate. The polypeptide is 3-dehydroquinate dehydratase (Escherichia coli O8 (strain IAI1)).